Here is a 317-residue protein sequence, read N- to C-terminus: Protease HtpX homolog (317 aa).

The next 2 helical transmembrane spans lie at 14 to 34 and 41 to 61; these read LMGI…LYYI and IALL…QWLF. Histidine 146 contacts Zn(2+). Glutamate 147 is an active-site residue. Zn(2+) is bound at residue histidine 150. The next 2 helical transmembrane spans lie at 158–178 and 189–209; these read MLLA…TLLF and IVLL…LILA. Residue glutamate 215 coordinates Zn(2+).

Belongs to the peptidase M48B family. The cofactor is Zn(2+).

It localises to the cell membrane. This is Protease HtpX homolog from Thermoplasma acidophilum (strain ATCC 25905 / DSM 1728 / JCM 9062 / NBRC 15155 / AMRC-C165).